A 198-amino-acid polypeptide reads, in one-letter code: Ion-translocating oxidoreductase complex subunit B (198 aa).

Residues 1-28 form a hydrophobic region; sequence MIITTVYFILVAIAVLALIFGAILGFAS. One can recognise a 4Fe-4S domain in the interval 34–92; it reads EADPIVEKIDALLPQSQCGQCGYPGCKPYAEAIANGDDITKCIPGGQTVIVNIAELMGV. The [4Fe-4S] cluster site is built by cysteine 51, cysteine 54, cysteine 59, cysteine 75, cysteine 115, cysteine 118, cysteine 121, cysteine 125, cysteine 145, cysteine 148, cysteine 151, and cysteine 155. 2 4Fe-4S ferredoxin-type domains span residues 106–135 and 136–165; these read MVAFIDEDMCIGCTKCIQACPVDAIIGTNK and AMHTIIPDLCTGCELCVPPCPTDCISMIKV.

Belongs to the 4Fe4S bacterial-type ferredoxin family. RnfB subfamily. As to quaternary structure, the complex is composed of six subunits: RnfA, RnfB, RnfC, RnfD, RnfE and RnfG. [4Fe-4S] cluster is required as a cofactor.

It localises to the cell inner membrane. Functionally, part of a membrane-bound complex that couples electron transfer with translocation of ions across the membrane. This is Ion-translocating oxidoreductase complex subunit B from Pasteurella multocida (strain Pm70).